Here is a 128-residue protein sequence, read N- to C-terminus: Small ribosomal subunit protein uS9 (128 aa).

The span at 97 to 113 shows a compositional bias: basic and acidic residues; it reads RSEGFMTRDSRSVERKK. The tract at residues 97-128 is disordered; that stretch reads RSEGFMTRDSRSVERKKPGQPKARRRFQFSKR. The segment covering 114–128 has biased composition (basic residues); the sequence is PGQPKARRRFQFSKR.

Belongs to the universal ribosomal protein uS9 family.

The sequence is that of Small ribosomal subunit protein uS9 from Phocaeicola vulgatus (strain ATCC 8482 / DSM 1447 / JCM 5826 / CCUG 4940 / NBRC 14291 / NCTC 11154) (Bacteroides vulgatus).